Here is a 534-residue protein sequence, read N- to C-terminus: MKQYKLMQVALLAILLFGWAGCSQNEEEVPGNVRNGIVLNVTDTGIISNEPSTRTEDTGFVTTFTQGDQIGLFAVKDGAILDEINNMPFTFNGSSWSGKPILYDDRLVGVNFYAYYPYQSEMTGKTDLIGDDFFAPLAAGWELTTEQSDQKAYAKQDLMTSNATALIGENGNYSLSFQLTHRMSLVVVKLPSTRYIFTDAEGVAMPEETPYVAMSVDVAFYLDNVEEGTKISPYYDAKKDEYRLLRKPSSENQIIGHYNDKQCTLDTAEKMKEGKYKRFVVDGGYKEVTHHLQVGDYYYADGSVVSGNEAEPAKDNCIGIVCWVGNPMPSVLYKDVAGTPYTATNDALLRSHPNCVHGLVMSLYTETGKFSPALTQSIHDWFMTTSFTSSYVSVTGYYDANENNKNKPLRFLGYNNSEVLDLYYDTFKTDFECFQYQDDCESSFPSPSITTGWYVPSSGELVALQDKDNSLESKLNTKLIKVSDKTMDISATYWSSTERNNKNMYIVTYSKTAGSAGTGGVKTNTYTYRFFLGF.

The N-terminal stretch at 1–21 is a signal peptide; the sequence is MKQYKLMQVALLAILLFGWAG. Cysteine 22 is lipidated: N-palmitoyl cysteine. Cysteine 22 is lipidated: S-diacylglycerol cysteine. Residues 22–54 constitute a propeptide that is removed on maturation; it reads CSQNEEEVPGNVRNGIVLNVTDTGIISNEPSTR.

It belongs to the bacteroidetes fimbrillin superfamily. Mfa-like family. As to quaternary structure, may be part of the fimbrial tip.

The protein localises to the fimbrium. It localises to the cell outer membrane. Functionally, probably a component of the fimbrium tip. Fimbriae are filamentous appendages on the cell surface that mediate cell adhesion and biofilm formation. The chain is Putative fimbrium tip subunit Fim1C from Bacteroides ovatus (strain ATCC 8483 / DSM 1896 / JCM 5824 / BCRC 10623 / CCUG 4943 / NCTC 11153).